Reading from the N-terminus, the 124-residue chain is Small ribosomal subunit protein uS12 (124 aa).

Asp89 carries the 3-methylthioaspartic acid modification.

This sequence belongs to the universal ribosomal protein uS12 family. In terms of assembly, part of the 30S ribosomal subunit. Contacts proteins S8 and S17. May interact with IF1 in the 30S initiation complex.

Functionally, with S4 and S5 plays an important role in translational accuracy. Interacts with and stabilizes bases of the 16S rRNA that are involved in tRNA selection in the A site and with the mRNA backbone. Located at the interface of the 30S and 50S subunits, it traverses the body of the 30S subunit contacting proteins on the other side and probably holding the rRNA structure together. The combined cluster of proteins S8, S12 and S17 appears to hold together the shoulder and platform of the 30S subunit. This Aliivibrio fischeri (strain ATCC 700601 / ES114) (Vibrio fischeri) protein is Small ribosomal subunit protein uS12.